A 330-amino-acid polypeptide reads, in one-letter code: Diacylglycerol acyltransferase/mycolyltransferase Ag85B (330 aa).

An N-terminal signal peptide occupies residues 1 to 40 (MTDLSEKVRAWGRRLLVGAAAAVTLPGLIGLAGGAATANA). Substrate is bound at residue 82–83 (LR). Residues 98–108 (FEWYYQSGLSV) form a fibronectin-binding region. A disulfide bond links Cys-127 and Cys-132. Substrate is bound by residues Ser-166 and Asp-194. Ser-166 serves as the catalytic Nucleophile. Glu-270 is an active-site residue. Substrate is bound by residues 272–275 (FVRS), Lys-279, and 302–304 (HSW). Residue His-302 is part of the active site.

Belongs to the mycobacterial A85 antigen family.

It localises to the secreted. The enzyme catalyses 2 alpha,alpha'-trehalose 6-mycolate = alpha,alpha'-trehalose 6,6'-bismycolate + alpha,alpha-trehalose. It carries out the reaction an acyl-CoA + a 1,2-diacyl-sn-glycerol = a triacyl-sn-glycerol + CoA. In terms of biological role, the antigen 85 proteins (FbpA, FbpB, FbpC) are responsible for the high affinity of mycobacteria for fibronectin, a large adhesive glycoprotein, which facilitates the attachment of M.tuberculosis to murine alveolar macrophages (AMs). They also help to maintain the integrity of the cell wall by catalyzing the transfer of mycolic acids to cell wall arabinogalactan and through the synthesis of alpha,alpha-trehalose dimycolate (TDM, cord factor). They catalyze the transfer of a mycoloyl residue from one molecule of alpha,alpha-trehalose monomycolate (TMM) to another TMM, leading to the formation of TDM. The protein is Diacylglycerol acyltransferase/mycolyltransferase Ag85B (fbpB) of Mycobacterium avium.